The primary structure comprises 237 residues: Phosphoribosylaminoimidazole-succinocarboxamide synthase (237 aa).

It belongs to the SAICAR synthetase family.

It catalyses the reaction 5-amino-1-(5-phospho-D-ribosyl)imidazole-4-carboxylate + L-aspartate + ATP = (2S)-2-[5-amino-1-(5-phospho-beta-D-ribosyl)imidazole-4-carboxamido]succinate + ADP + phosphate + 2 H(+). It functions in the pathway purine metabolism; IMP biosynthesis via de novo pathway; 5-amino-1-(5-phospho-D-ribosyl)imidazole-4-carboxamide from 5-amino-1-(5-phospho-D-ribosyl)imidazole-4-carboxylate: step 1/2. The chain is Phosphoribosylaminoimidazole-succinocarboxamide synthase from Methanosarcina acetivorans (strain ATCC 35395 / DSM 2834 / JCM 12185 / C2A).